We begin with the raw amino-acid sequence, 123 residues long: Pre-B lymphocyte protein 3 (123 aa).

The signal sequence occupies residues 1-20; sequence MACRCLSFLLMGTFLSVSQT. The region spanning 21 to 123 is the Ig-like domain; the sequence is VLAQLDALLV…YCSVGYGFSP (103 aa). A disulfide bond links Cys40 and Cys115.

It belongs to the immunoglobulin superfamily. Expressed in B-cell precursors. Expressed in fetal liver, bone marrow, spleen and lymph node.

Associates with the Ig-mu chain to form a molecular complex that is expressed on the surface of pre-B-cells. The sequence is that of Pre-B lymphocyte protein 3 (VPREB3) from Homo sapiens (Human).